Reading from the N-terminus, the 145-residue chain is Putative antiporter subunit mnhG2 (145 aa).

A run of 3 helical transmembrane segments spans residues 11–31, 51–71, and 72–92; these read IAAVMLLLGSFIALISAIGIV, VLLTLIGVLIYFIVNTGFFSV, and RLLLSLVFINLTSPVGMHLVA.

It belongs to the CPA3 antiporters (TC 2.A.63) subunit G family. In terms of assembly, may form a heterooligomeric complex that consists of seven subunits: mnhA2, mnhB2, mnhC2, mnhD2, mnhE2, mnhF2 and mnhG2.

It localises to the cell membrane. The protein is Putative antiporter subunit mnhG2 (mnhG2) of Staphylococcus aureus (strain JH9).